The sequence spans 637 residues: Phospholipase B (637 aa).

A signal peptide spans 1–19; that stretch reads MSIATATFAFSLFATIAFA. One can recognise a PLA2c domain in the interval 46–572; that stretch reads DCPSNVTWIR…DTWCWAGDDN (527 aa). Residues N50, N56, N122, N231, N246, N272, N314, N343, N387, N433, N481, N501, N528, N553, N572, N594, and N606 are each glycosylated (N-linked (GlcNAc...) asparagine).

Belongs to the lysophospholipase family. In terms of processing, N-glycosylated.

It localises to the secreted. The protein localises to the cell membrane. The enzyme catalyses a 1-acyl-sn-glycero-3-phosphocholine + H2O = sn-glycerol 3-phosphocholine + a fatty acid + H(+). With respect to regulation, inhibited by Fe(3+) ion. Functionally, exhibits phospholipase B (PLB), lysophospholipase (LPL) and lysophospholipase/transacylase (LPTA) activities. This chain is Phospholipase B (PLB1), found in Cryptococcus neoformans var. grubii serotype A (strain H99 / ATCC 208821 / CBS 10515 / FGSC 9487) (Filobasidiella neoformans var. grubii).